The following is a 518-amino-acid chain: Membrane-bound lytic murein transglycosylase F (518 aa).

Positions 1–21 (MKKLKINYLFIGILALLLAVA) are cleaved as a signal peptide. Residues 22–269 (LWPSIPWFGK…RIEEKYLGHG (248 aa)) form a non-LT domain region. Residues 270–518 (DDFDYVDTRT…SRKGSEEKQN (249 aa)) form an LT domain region. Glutamate 314 is a catalytic residue.

The protein in the N-terminal section; belongs to the bacterial solute-binding protein 3 family. This sequence in the C-terminal section; belongs to the transglycosylase Slt family.

Its subcellular location is the cell outer membrane. The catalysed reaction is Exolytic cleavage of the (1-&gt;4)-beta-glycosidic linkage between N-acetylmuramic acid (MurNAc) and N-acetylglucosamine (GlcNAc) residues in peptidoglycan, from either the reducing or the non-reducing ends of the peptidoglycan chains, with concomitant formation of a 1,6-anhydrobond in the MurNAc residue.. Functionally, murein-degrading enzyme that degrades murein glycan strands and insoluble, high-molecular weight murein sacculi, with the concomitant formation of a 1,6-anhydromuramoyl product. Lytic transglycosylases (LTs) play an integral role in the metabolism of the peptidoglycan (PG) sacculus. Their lytic action creates space within the PG sacculus to allow for its expansion as well as for the insertion of various structures such as secretion systems and flagella. The polypeptide is Membrane-bound lytic murein transglycosylase F (Shigella dysenteriae serotype 1 (strain Sd197)).